A 184-amino-acid polypeptide reads, in one-letter code: MGLEERLPGGILLSTVEKVAGYVRKGSLWPATFGLACCAIEMMATAGPRFDISRFGMERFSATPRQADLMIVAGRVSQKMAPVLRQIYDQMAEPKWVLAMGVCASSGGMFNNYAVVQGVDHVVPVDIYLPGCPPRPEMLLHAILKLHDKIQQMPLGVNREEAIREAERAALAVTPTIELKGLLR.

[4Fe-4S] cluster is bound by residues C37, C38, C103, and C132.

This sequence belongs to the complex I 20 kDa subunit family. NDH-1 is composed of 14 different subunits. Subunits NuoB, C, D, E, F, and G constitute the peripheral sector of the complex. Requires [4Fe-4S] cluster as cofactor.

The protein resides in the cell membrane. It catalyses the reaction a quinone + NADH + 5 H(+)(in) = a quinol + NAD(+) + 4 H(+)(out). Functionally, NDH-1 shuttles electrons from NADH, via FMN and iron-sulfur (Fe-S) centers, to quinones in the respiratory chain. The immediate electron acceptor for the enzyme in this species is believed to be a menaquinone. Couples the redox reaction to proton translocation (for every two electrons transferred, four hydrogen ions are translocated across the cytoplasmic membrane), and thus conserves the redox energy in a proton gradient. The polypeptide is NADH-quinone oxidoreductase subunit B (Mycolicibacterium vanbaalenii (strain DSM 7251 / JCM 13017 / BCRC 16820 / KCTC 9966 / NRRL B-24157 / PYR-1) (Mycobacterium vanbaalenii)).